The sequence spans 478 residues: Hemolysin secretion protein D, chromosomal (478 aa).

Residues 1-59 (MKTWLMGFSEFLLRYKLVWSETWKIRKQLDTPVREKDENEFLPAHLELIETPVSRRPRL) are Cytoplasmic-facing. The helical; Signal-anchor for type II membrane protein transmembrane segment at 60 to 80 (VAYFIMGFLVIAFILSVLGQV) threads the bilayer. Topologically, residues 81–478 (EIVATANGKL…ESVTESLHER (398 aa)) are periplasmic.

This sequence belongs to the membrane fusion protein (MFP) (TC 8.A.1) family.

The protein resides in the cell inner membrane. Its function is as follows. Involved in the transport of hemolysin A. The chain is Hemolysin secretion protein D, chromosomal (hlyD) from Escherichia coli.